We begin with the raw amino-acid sequence, 365 residues long: Phosphoserine aminotransferase (365 aa).

Arg-40 is an L-glutamate binding site. Pyridoxal 5'-phosphate is bound by residues 74–75, Phe-99, Thr-155, Asp-177, and Gln-200; that span reads AS. Lys-201 bears the N6-(pyridoxal phosphate)lysine mark. 241–242 contacts pyridoxal 5'-phosphate; that stretch reads NT.

The protein belongs to the class-V pyridoxal-phosphate-dependent aminotransferase family. SerC subfamily. Homodimer. Pyridoxal 5'-phosphate serves as cofactor.

The protein resides in the cytoplasm. It catalyses the reaction O-phospho-L-serine + 2-oxoglutarate = 3-phosphooxypyruvate + L-glutamate. It carries out the reaction 4-(phosphooxy)-L-threonine + 2-oxoglutarate = (R)-3-hydroxy-2-oxo-4-phosphooxybutanoate + L-glutamate. The protein operates within amino-acid biosynthesis; L-serine biosynthesis; L-serine from 3-phospho-D-glycerate: step 2/3. Functionally, catalyzes the reversible conversion of 3-phosphohydroxypyruvate to phosphoserine and of 3-hydroxy-2-oxo-4-phosphonooxybutanoate to phosphohydroxythreonine. The chain is Phosphoserine aminotransferase from Lactococcus lactis subsp. cremoris (strain MG1363).